We begin with the raw amino-acid sequence, 82 residues long: Chlorosome protein E (82 aa).

H26 lines the a bacteriochlorophyll c pocket. The segment at 55 to 82 (GSSGLKGSSPKYSGYATPSKEVKSRFEK) is disordered. Over residues 59-69 (LKGSSPKYSGY) the composition is skewed to low complexity.

It belongs to the BChl C/E-binding protein family.

The protein localises to the chlorosome. It is found in the chlorosome envelope. Component of the photosynthetic apparatus. The light harvesting B740 complex binds bacteriochlorophyll c. In Chlorobaculum tepidum (strain ATCC 49652 / DSM 12025 / NBRC 103806 / TLS) (Chlorobium tepidum), this protein is Chlorosome protein E (csmE).